The following is a 362-amino-acid chain: Peptide chain release factor 1 (362 aa).

Glutamine 237 carries the post-translational modification N5-methylglutamine.

The protein belongs to the prokaryotic/mitochondrial release factor family. Post-translationally, methylated by PrmC. Methylation increases the termination efficiency of RF1.

It is found in the cytoplasm. Its function is as follows. Peptide chain release factor 1 directs the termination of translation in response to the peptide chain termination codons UAG and UAA. The polypeptide is Peptide chain release factor 1 (Legionella pneumophila (strain Paris)).